The chain runs to 356 residues: Alanine racemase (356 aa).

The active-site Proton acceptor; specific for D-alanine is K35. An N6-(pyridoxal phosphate)lysine modification is found at K35. A substrate-binding site is contributed by R130. Y253 (proton acceptor; specific for L-alanine) is an active-site residue. M301 contacts substrate.

This sequence belongs to the alanine racemase family. Pyridoxal 5'-phosphate is required as a cofactor.

It catalyses the reaction L-alanine = D-alanine. The protein operates within amino-acid biosynthesis; D-alanine biosynthesis; D-alanine from L-alanine: step 1/1. Catalyzes the interconversion of L-alanine and D-alanine. May also act on other amino acids. This Burkholderia mallei (strain NCTC 10229) protein is Alanine racemase (alr).